A 101-amino-acid chain; its full sequence is Small ribosomal subunit protein uS14 (101 aa).

This sequence belongs to the universal ribosomal protein uS14 family. In terms of assembly, part of the 30S ribosomal subunit. Contacts proteins S3 and S10.

Binds 16S rRNA, required for the assembly of 30S particles and may also be responsible for determining the conformation of the 16S rRNA at the A site. The polypeptide is Small ribosomal subunit protein uS14 (Bordetella parapertussis (strain 12822 / ATCC BAA-587 / NCTC 13253)).